Consider the following 406-residue polypeptide: Probable tRNA sulfurtransferase (406 aa).

The 103-residue stretch at proline 60–arginine 162 folds into the THUMP domain. Residues leucine 180–leucine 181, histidine 205–phenylalanine 206, arginine 262, glycine 284, and glutamine 293 each bind ATP.

Belongs to the ThiI family.

Its subcellular location is the cytoplasm. The catalysed reaction is [ThiI sulfur-carrier protein]-S-sulfanyl-L-cysteine + a uridine in tRNA + 2 reduced [2Fe-2S]-[ferredoxin] + ATP + H(+) = [ThiI sulfur-carrier protein]-L-cysteine + a 4-thiouridine in tRNA + 2 oxidized [2Fe-2S]-[ferredoxin] + AMP + diphosphate. It carries out the reaction [ThiS sulfur-carrier protein]-C-terminal Gly-Gly-AMP + S-sulfanyl-L-cysteinyl-[cysteine desulfurase] + AH2 = [ThiS sulfur-carrier protein]-C-terminal-Gly-aminoethanethioate + L-cysteinyl-[cysteine desulfurase] + A + AMP + 2 H(+). It participates in cofactor biosynthesis; thiamine diphosphate biosynthesis. Its function is as follows. Catalyzes the ATP-dependent transfer of a sulfur to tRNA to produce 4-thiouridine in position 8 of tRNAs, which functions as a near-UV photosensor. Also catalyzes the transfer of sulfur to the sulfur carrier protein ThiS, forming ThiS-thiocarboxylate. This is a step in the synthesis of thiazole, in the thiamine biosynthesis pathway. The sulfur is donated as persulfide by IscS. The polypeptide is Probable tRNA sulfurtransferase (Thermus thermophilus (strain ATCC 27634 / DSM 579 / HB8)).